A 393-amino-acid chain; its full sequence is MEPTNDAETLETQGEVTTAIWPSSQILKTTIDIPGTLSHDGRYIQYNLFGHIFELPAKYKPPIRPIGRGACGIVCSAVDSETNEKVAIKKITQVFDNTIEAKRTLREIKLLRHFDHENIVAIRDVILPPQRDSFEDVYIVNELMEFDLYRTLKSDQELTKDHGMYFMYQILRGLKYIHSANVLHRDLKPSNLLLSTQCDLKICDFGLARATPESNLMTEYVVTRWYRAPELLLGSSDYTAAIDVWSVGCIFMEIMNREPLFPGKDQVNQLRLLLELIGTPSEEELGSLSEYAKRYIRQLPTLPRQSFTEKFPNVPPLAIDLVEKMLTFDPKQRISVKEALAHPYLSSFHDITDEPECSEPFNFDLDEHPFSEEQFRELIYCEALAFNPETSND.

One can recognise a Protein kinase domain in the interval 60–345; sequence KPPIRPIGRG…VKEALAHPYL (286 aa). Residues 66–74 and Lys-89 each bind ATP; that span reads IGRGACGIV. Residue Asp-186 is the Proton acceptor of the active site. Thr-218 carries the post-translational modification Phosphothreonine. A TXY motif is present at residues 218–220; the sequence is TEY. At Tyr-220 the chain carries Phosphotyrosine. Thr-223 carries the post-translational modification Phosphothreonine.

The protein belongs to the protein kinase superfamily. CMGC Ser/Thr protein kinase family. MAP kinase subfamily. Interacts with MKK2. Post-translationally, dually phosphorylated on Thr-218 and Tyr-220, which activates the enzyme.

The enzyme catalyses L-seryl-[protein] + ATP = O-phospho-L-seryl-[protein] + ADP + H(+). It catalyses the reaction L-threonyl-[protein] + ATP = O-phospho-L-threonyl-[protein] + ADP + H(+). Activated by threonine and tyrosine phosphorylation. The polypeptide is Mitogen-activated protein kinase 10 (MPK10) (Arabidopsis thaliana (Mouse-ear cress)).